The sequence spans 112 residues: Divalent-cation tolerance protein CutA (112 aa).

Cu cation-binding residues include Cys-16, His-83, and His-84.

Belongs to the CutA family. As to quaternary structure, homotrimer. Cu cation serves as cofactor.

It is found in the cytoplasm. In terms of biological role, involved in resistance toward heavy metals. This is Divalent-cation tolerance protein CutA from Shigella flexneri.